The primary structure comprises 160 residues: Cytochrome b6-f complex subunit 4 (160 aa).

Helical transmembrane passes span 36 to 56 (LLYV…GLAV), 95 to 115 (LLGV…PFIE), and 131 to 151 (LVFI…CLPI).

This sequence belongs to the cytochrome b family. PetD subfamily. As to quaternary structure, the 4 large subunits of the cytochrome b6-f complex are cytochrome b6, subunit IV (17 kDa polypeptide, petD), cytochrome f and the Rieske protein, while the 4 small subunits are petG, petL, petM and petN. The complex functions as a dimer.

The protein resides in the plastid. It is found in the chloroplast thylakoid membrane. Component of the cytochrome b6-f complex, which mediates electron transfer between photosystem II (PSII) and photosystem I (PSI), cyclic electron flow around PSI, and state transitions. This is Cytochrome b6-f complex subunit 4 from Trieres chinensis (Marine centric diatom).